Reading from the N-terminus, the 547-residue chain is Serine/threonine-protein kinase RIO2 (547 aa).

In terms of domain architecture, Protein kinase spans 97-273; that stretch reads VGNQMGVGKE…RDVKCIREFF (177 aa). Lysine 123 contacts ATP. Aspartate 228 acts as the Proton acceptor in catalysis. Phosphoserine occurs at positions 332, 337, 350, 362, 385, and 390. Residues 352–385 are disordered; the sequence is LEKEADPADESGGSWCCSSTDSKQIKDGGLPEES. A Nuclear export signal motif is present at residues 399 to 408; the sequence is AVEEMERQVL. The disordered stretch occupies residues 404 to 445; it reads ERQVLPHRSVTEFSEESRRTENDGQPGQRSPAGSEDCDDEPP. Phosphoserine is present on residues serine 412, serine 417, serine 433, serine 437, and serine 543.

The protein belongs to the protein kinase superfamily. RIO-type Ser/Thr kinase family. As to quaternary structure, associated with late 40S pre-ribosomal particles. Interacts with PLK1 (via its N-terminus). The cofactor is Mg(2+). In terms of processing, autophosphorylated (in vitro). Phosphorylation affects the timing of the metaphase-anaphase transition.

Its subcellular location is the cytoplasm. The catalysed reaction is L-seryl-[protein] + ATP = O-phospho-L-seryl-[protein] + ADP + H(+). It carries out the reaction L-threonyl-[protein] + ATP = O-phospho-L-threonyl-[protein] + ADP + H(+). In terms of biological role, serine/threonine-protein kinase involved in the final steps of cytoplasmic maturation of the 40S ribosomal subunit. Involved in export of the 40S pre-ribosome particles (pre-40S) from the nucleus to the cytoplasm. Its kinase activity is required for the release of NOB1, PNO1 and LTV1 from the late pre-40S and the processing of 18S-E pre-rRNA to the mature 18S rRNA. May regulate the timing of the metaphase-anaphase transition during mitotic progression, and its phosphorylation, may regulate this function. The sequence is that of Serine/threonine-protein kinase RIO2 (Riok2) from Mus musculus (Mouse).